The sequence spans 104 residues: SOSS complex subunit C (104 aa).

Alanine 2 carries the N-acetylalanine modification. Serine 50 is subject to Phosphoserine.

Belongs to the SOSS-C family. In terms of assembly, component of the SOSS complex, composed of SOSS-B (SOSS-B1/NABP2 or SOSS-B2/NABP1), SOSS-A/INTS3 and SOSS-C/INIP. SOSS complexes containing SOSS-B1/NABP2 are more abundant than complexes containing SOSS-B2/NABP1. Interacts with INTS3; the interaction is direct.

Its subcellular location is the nucleus. Component of the SOSS complex, a multiprotein complex that functions downstream of the MRN complex to promote DNA repair and G2/M checkpoint. The SOSS complex associates with single-stranded DNA at DNA lesions and influences diverse endpoints in the cellular DNA damage response including cell-cycle checkpoint activation, recombinational repair and maintenance of genomic stability. Required for efficient homologous recombination-dependent repair of double-strand breaks (DSBs) and ATM-dependent signaling pathways. This is SOSS complex subunit C (Inip) from Mus musculus (Mouse).